The chain runs to 204 residues: HTH-type transcriptional repressor KstR (204 aa).

In terms of domain architecture, HTH tetR-type spans 18 to 78 (RERRKRILDA…SALGREFERI (61 aa)). The H-T-H motif DNA-binding region spans 41–60 (QMRAVAERADVAVGTLYRYF).

As to quaternary structure, homodimer.

Its function is as follows. Controls the expression of genes used for utilizing diverse lipids as energy sources. The protein is HTH-type transcriptional repressor KstR (kstR) of Mycolicibacterium smegmatis (strain ATCC 700084 / mc(2)155) (Mycobacterium smegmatis).